The sequence spans 273 residues: MSTPGTLHIVATPIGNLGDLSPRAQHILRTVTMICAEDTRHTRQLLAHFGIERPLLALHAHNEDTLAERIITRLISGASLALVSDAGTPLISDPGFLLVRAARAAGIRVTPVPGPSALIAALSVSGLPSNRFTFEGFLPAKPTARRDRLTHLAHEPRTLIFYEASHRIAECLTDLATIFGSMRAAVVARELTKIFETVLDGTLATLQTQVANDDNQRKGEFVIIVQGAADQDAAKITEGRRVYALLKEHLPPSSAAKLAAEITGAPRKALYGG.

The protein belongs to the methyltransferase superfamily. RsmI family.

It localises to the cytoplasm. It catalyses the reaction cytidine(1402) in 16S rRNA + S-adenosyl-L-methionine = 2'-O-methylcytidine(1402) in 16S rRNA + S-adenosyl-L-homocysteine + H(+). Catalyzes the 2'-O-methylation of the ribose of cytidine 1402 (C1402) in 16S rRNA. In Xylella fastidiosa (strain 9a5c), this protein is Ribosomal RNA small subunit methyltransferase I.